Consider the following 1990-residue polypeptide: Protein TANC2 (1990 aa).

Disordered regions lie at residues 1-85 (MFRN…SVDE) and 129-149 (SPCS…PCST). A phosphoserine mark is found at Ser-169, Ser-238, Ser-294, and Ser-400. The segment at 396–442 (IASDSPHASPKHVDANRELPLTQPPSAHSSITSGSCPGTPEMRRRQE) is disordered. A compositionally biased stretch (polar residues) spans 419 to 431 (PPSAHSSITSGSC). ANK repeat units follow at residues 846-878 (EGLS…NINY), 884-913 (NNAP…NVDA), 917-946 (SGLT…KVDH), 950-979 (NGQC…TMAG), 990-1019 (AIQQ…KDEE), 1033-1062 (WGET…AVAQ), 1066-1095 (RGAV…DVNM), 1099-1128 (QGRT…SIAL), 1132-1161 (EGLT…ATDH), 1165-1194 (NGRT…MIEH), and 1198-1227 (SGMR…KIGP). TPR repeat units follow at residues 1244-1277 (LSKL…FPRE), 1291-1324 (VSLL…KPKS), and 1325-1358 (YEAY…CPNN). Disordered stretches follow at residues 1372-1401 (CRQM…EPQH), 1430-1586 (EARP…KMAQ), and 1692-1718 (LTKE…PQIG). Residues Ser-1442 and Ser-1458 each carry the phosphoserine modification. A compositionally biased stretch (polar residues) spans 1469 to 1498 (RSSSSVGSPTRQTYQSTSPALSPTHQNSHY). Ser-1530 and Ser-1545 each carry phosphoserine. Positions 1553-1572 (VYRSQSGSPVRYQQETSVSQ) are enriched in polar residues. Asymmetric dimethylarginine is present on residues Arg-1563 and Arg-1576. Ser-1579 bears the Phosphoserine mark. Ser-1722 carries the phosphoserine modification. Low complexity predominate over residues 1783 to 1798 (SPSSNSISSTSNLTPT). Disordered stretches follow at residues 1783–1803 (SPSS…RPSS) and 1821–1843 (DELS…SRTT). Phosphoserine is present on residues Ser-1824 and Ser-1827. Asn-1928 carries an N-linked (GlcNAc...) asparagine glycan. Residues 1968-1990 (SRDSRQGQTSPIKPKRPFVESNV) are disordered.

Belongs to the TANC family. In terms of assembly, interacts with KIF1A; the interaction decreases in presence of calcium.

The protein resides in the cell projection. Its subcellular location is the dendritic spine. Its function is as follows. Scaffolding protein in the dendritic spines which acts as immobile postsynaptic posts able to recruit KIF1A-driven dense core vesicles to dendritic spines. This chain is Protein TANC2 (TANC2), found in Homo sapiens (Human).